The sequence spans 344 residues: Uroporphyrinogen decarboxylase (344 aa).

Substrate-binding positions include 25–29, Asp75, Tyr152, Ser207, and His323; that span reads RQAGR.

It belongs to the uroporphyrinogen decarboxylase family. Homodimer.

It localises to the cytoplasm. The enzyme catalyses uroporphyrinogen III + 4 H(+) = coproporphyrinogen III + 4 CO2. Its pathway is porphyrin-containing compound metabolism; protoporphyrin-IX biosynthesis; coproporphyrinogen-III from 5-aminolevulinate: step 4/4. In terms of biological role, catalyzes the decarboxylation of four acetate groups of uroporphyrinogen-III to yield coproporphyrinogen-III. The polypeptide is Uroporphyrinogen decarboxylase (Roseobacter denitrificans (strain ATCC 33942 / OCh 114) (Erythrobacter sp. (strain OCh 114))).